A 143-amino-acid polypeptide reads, in one-letter code: Large ribosomal subunit protein uL11 (143 aa).

The protein belongs to the universal ribosomal protein uL11 family. Part of the ribosomal stalk of the 50S ribosomal subunit. Interacts with L10 and the large rRNA to form the base of the stalk. L10 forms an elongated spine to which L12 dimers bind in a sequential fashion forming a multimeric L10(L12)X complex. Post-translationally, one or more lysine residues are methylated.

In terms of biological role, forms part of the ribosomal stalk which helps the ribosome interact with GTP-bound translation factors. In Ralstonia nicotianae (strain ATCC BAA-1114 / GMI1000) (Ralstonia solanacearum), this protein is Large ribosomal subunit protein uL11.